The primary structure comprises 92 residues: Large ribosomal subunit protein bL27 (92 aa).

A disordered region spans residues 1–22 (MAHTKAGGSTRNGRDSRGQRLG).

It belongs to the bacterial ribosomal protein bL27 family.

The sequence is that of Large ribosomal subunit protein bL27 from Mycoplasmopsis agalactiae (strain NCTC 10123 / CIP 59.7 / PG2) (Mycoplasma agalactiae).